A 514-amino-acid chain; its full sequence is Multifunctional alkaline phosphatase superfamily protein pRL90232 (514 aa).

Mn(2+) is bound by residues Asp-12, Cys-57, Asp-324, and His-325. The active-site Nucleophile is the Cys-57. At Cys-57 the chain carries 3-oxoalanine (Cys).

The protein belongs to the alkaline phosphatase superfamily. As to quaternary structure, homotetramer. Mn(2+) is required as a cofactor. In terms of processing, the conversion to 3-oxoalanine (also known as C-formylglycine, FGly), of a serine or cysteine residue in prokaryotes and of a cysteine residue in eukaryotes, is critical for catalytic activity.

Its function is as follows. Hydrolytic enzyme with a broad substrate specificity acting on phosphate diesters and phosphonate monoesters. This Rhizobium johnstonii (strain DSM 114642 / LMG 32736 / 3841) (Rhizobium leguminosarum bv. viciae) protein is Multifunctional alkaline phosphatase superfamily protein pRL90232.